Consider the following 631-residue polypeptide: Phosphomethylpyrimidine synthase (631 aa).

Substrate is bound by residues N239, M268, Y297, H333, 353 to 355 (SRG), 394 to 397 (DGLR), and E433. H437 is a Zn(2+) binding site. Residue Y460 participates in substrate binding. H501 contributes to the Zn(2+) binding site. [4Fe-4S] cluster contacts are provided by C581, C584, and C589.

It belongs to the ThiC family. As to quaternary structure, homodimer. It depends on [4Fe-4S] cluster as a cofactor.

The enzyme catalyses 5-amino-1-(5-phospho-beta-D-ribosyl)imidazole + S-adenosyl-L-methionine = 4-amino-2-methyl-5-(phosphooxymethyl)pyrimidine + CO + 5'-deoxyadenosine + formate + L-methionine + 3 H(+). Its pathway is cofactor biosynthesis; thiamine diphosphate biosynthesis. Its function is as follows. Catalyzes the synthesis of the hydroxymethylpyrimidine phosphate (HMP-P) moiety of thiamine from aminoimidazole ribotide (AIR) in a radical S-adenosyl-L-methionine (SAM)-dependent reaction. This is Phosphomethylpyrimidine synthase from Salmonella dublin (strain CT_02021853).